The chain runs to 63 residues: Large ribosomal subunit protein bL32 (63 aa).

Disordered stretches follow at residues 1 to 25 (MAVP…LTTP) and 42 to 63 (VSPK…QNND). Basic residues predominate over residues 7–20 (KTSKQKKRSRRGHI). Residues 54–63 (ANENKQQNND) are compositionally biased toward polar residues.

Belongs to the bacterial ribosomal protein bL32 family.

The sequence is that of Large ribosomal subunit protein bL32 from Lactobacillus johnsonii (strain CNCM I-12250 / La1 / NCC 533).